Consider the following 757-residue polypeptide: Polyribonucleotide nucleotidyltransferase (757 aa).

Positions 488 and 494 each coordinate Mg(2+). In terms of domain architecture, KH spans proline 555–isoleucine 614. The 69-residue stretch at glycine 624–lysine 692 folds into the S1 motif domain. Positions valine 693 to glycine 757 are disordered. The span at alanine 720–proline 736 shows a compositional bias: basic and acidic residues. Positions proline 737–proline 747 are enriched in low complexity.

This sequence belongs to the polyribonucleotide nucleotidyltransferase family. It depends on Mg(2+) as a cofactor.

It localises to the cytoplasm. The catalysed reaction is RNA(n+1) + phosphate = RNA(n) + a ribonucleoside 5'-diphosphate. In terms of biological role, involved in mRNA degradation. Catalyzes the phosphorolysis of single-stranded polyribonucleotides processively in the 3'- to 5'-direction. The protein is Polyribonucleotide nucleotidyltransferase of Verminephrobacter eiseniae (strain EF01-2).